Reading from the N-terminus, the 97-residue chain is Plasmid stability protein StbC (97 aa).

Functionally, involved in plasmid stability. The protein is Plasmid stability protein StbC (stbC) of Pseudomonas syringae pv. tomato (strain ATCC BAA-871 / DC3000).